Here is a 212-residue protein sequence, read N- to C-terminus: Thaumatin-like protein 1b (212 aa).

7 disulfide bridges follow: Cys-47–Cys-57, Cys-62–Cys-69, Cys-117–Cys-200, Cys-122–Cys-183, Cys-130–Cys-146, Cys-150–Cys-159, and Cys-160–Cys-170.

It belongs to the thaumatin family.

It is found in the secreted. The polypeptide is Thaumatin-like protein 1b (Malus domestica (Apple)).